The primary structure comprises 1252 residues: Protein ITPRID2 (1252 aa).

Residues 28 to 70 (CRSSWQASETEDLSTETTTQDEDEDDEEDLPGTKLPAPAGRGN) are disordered. The segment covering 36 to 57 (ETEDLSTETTTQDEDEDDEEDL) has biased composition (acidic residues). Phosphothreonine is present on Thr-85. Residues Ser-90, Ser-109, Ser-207, Ser-268, and Ser-328 each carry the phosphoserine modification. Disordered stretches follow at residues 306–483 (DKTE…HVPA), 552–575 (HVTP…APLQ), and 595–636 (FPQC…GELP). Positions 357–372 (TVTEEVSGSSSTVTDS) are enriched in low complexity. Composition is skewed to basic and acidic residues over residues 395-407 (SREA…DPLR) and 415-428 (DLGH…HCEL). Residues 429–441 (ESSSELKSAQASS) show a composition bias toward low complexity. Ser-465 is subject to Phosphoserine. Ser-643, Ser-667, Ser-736, Ser-738, Ser-745, Ser-758, and Ser-766 each carry phosphoserine. Lys-807 is covalently cross-linked (Glycyl lysine isopeptide (Lys-Gly) (interchain with G-Cter in SUMO2)). Phosphoserine occurs at positions 866 and 898. A coiled-coil region spans residues 955–1031 (QELQVVRRSL…LLGLDEQLRA (77 aa)). Phosphoserine is present on residues Ser-1036, Ser-1051, Ser-1056, Ser-1059, and Ser-1114. Disordered regions lie at residues 1095 to 1131 (GESS…GSKP) and 1147 to 1180 (ALTP…ASPV). Over residues 1103–1117 (SQATSESSSVCSSPS) the composition is skewed to low complexity. At Thr-1149 the chain carries Phosphothreonine. Over residues 1151 to 1161 (TAPSRTGSVQT) the composition is skewed to polar residues. Ser-1154 carries the phosphoserine modification. Thr-1161 bears the Phosphothreonine mark.

The protein resides in the cytoplasm. This is Protein ITPRID2 (Itprid2) from Mus musculus (Mouse).